We begin with the raw amino-acid sequence, 465 residues long: ATP synthase subunit beta (465 aa).

148-155 (GGAGVGKT) serves as a coordination point for ATP.

This sequence belongs to the ATPase alpha/beta chains family. F-type ATPases have 2 components, CF(1) - the catalytic core - and CF(0) - the membrane proton channel. CF(1) has five subunits: alpha(3), beta(3), gamma(1), delta(1), epsilon(1). CF(0) has three main subunits: a(1), b(2) and c(9-12). The alpha and beta chains form an alternating ring which encloses part of the gamma chain. CF(1) is attached to CF(0) by a central stalk formed by the gamma and epsilon chains, while a peripheral stalk is formed by the delta and b chains.

The protein localises to the cell inner membrane. The catalysed reaction is ATP + H2O + 4 H(+)(in) = ADP + phosphate + 5 H(+)(out). Produces ATP from ADP in the presence of a proton gradient across the membrane. The catalytic sites are hosted primarily by the beta subunits. The chain is ATP synthase subunit beta from Neisseria meningitidis serogroup A / serotype 4A (strain DSM 15465 / Z2491).